The sequence spans 577 residues: Protein CBFA2T1 (577 aa).

The span at 1-10 shows a compositional bias: basic and acidic residues; sequence MPDRTEKHST. Residues 1–87 form a disordered region; sequence MPDRTEKHST…SSSSLANQQL (87 aa). Position 14 is a phosphoserine (Ser14). The segment covering 42–59 has biased composition (polar residues); the sequence is SSFTPTTLTNGTSHSPTA. Over residues 68 to 87 the composition is skewed to low complexity; it reads NGFSNGPSSSSSSSLANQQL. The 96-residue stretch at 93-188 folds into the TAFH domain; it reads ARQLSKLKRF…NPAQYLAQHE (96 aa). Residues 203–271 are disordered; the sequence is SELLLDVNEN…LPHPTPPPPQ (69 aa). The span at 211–237 shows a compositional bias: basic and acidic residues; the sequence is ENGKRRTPDRTKENGFDREPLHSEHPS. Polar residues predominate over residues 244-258; sequence SPGQRYSPNNGLSYQ. Pro residues predominate over residues 262–271; it reads LPHPTPPPPQ. The segment at 310-356 is important for oligomerization; it reads QEEMIDHRLTDREWAEEWKHLDHLLNCIMDMVEKTRRSLTVLRRCQE. Positions 310-356 are nervy homology region 2 (NHR2); it reads QEEMIDHRLTDREWAEEWKHLDHLLNCIMDMVEKTRRSLTVLRRCQE. The segment at 374–396 is disordered; it reads DLKKGGSSSSSHSRQQSPVNPDP. Residues 380 to 390 are compositionally biased toward low complexity; sequence SSSSSHSRQQS. Ser390 carries the post-translational modification Phosphoserine. The tract at residues 416 to 465 is nervy homology region 3 (NHR3); that stretch reads EEIWKKAEEAVNEVKRQAMTELQKAVSEAERKAHDMITTERAKMERTVAE. Zn(2+) contacts are provided by Cys488, Cys491, Cys499, Cys502, Cys508, Cys512, His520, and Cys524. Residues 488–524 form an MYND-type zinc finger; the sequence is CWNCGRKASETCSGCNTARYCGSFCQHKDWEKHHHIC. The interval 529–577 is disordered; sequence QAPQQGDTPAVSSSVTPSSGAGSPMDTPPAATPRSTTPGTPSTIETTPR. 2 stretches are compositionally biased toward low complexity: residues 536-553 and 560-577; these read TPAV…GSPM and TPRS…TTPR.

The protein belongs to the CBFA2T family. As to quaternary structure, homotetramer. Heterotetramer with CBFA2T2 and CBFA2T3. Interacts with TCF12, SIN3A, HDAC1, HDAC2, HDAC3, NCOR1 and NCOR2. Interacts with ATN1 (via its N-terminus); the interaction enhances the transcriptional repression.

Its subcellular location is the nucleus. Transcriptional corepressor which facilitates transcriptional repression via its association with DNA-binding transcription factors and recruitment of other corepressors and histone-modifying enzymes. Can repress the expression of MMP7 in a ZBTB33-dependent manner. Can repress transactivation mediated by TCF12. Acts as a negative regulator of adipogenesis. The sequence is that of Protein CBFA2T1 (Runx1t1) from Mus musculus (Mouse).